The primary structure comprises 152 residues: Putative RING finger protein 157L (152 aa).

Residues 111–146 (CVVCYENEICIKIQPCNHFVVCKSCFNRLNTCPMCR) form an RING-type zinc finger.

It belongs to the IIV-6 157L family.

This Invertebrate iridescent virus 6 (IIV-6) protein is Putative RING finger protein 157L.